The following is a 41-amino-acid chain: Peptide Hact-SCRiP1 (41 aa).

4 disulfides stabilise this stretch: cysteine 5–cysteine 37, cysteine 12–cysteine 31, cysteine 19–cysteine 38, and cysteine 26–cysteine 39.

In terms of tissue distribution, expressed in tentacles.

The protein resides in the nematocyst. It localises to the secreted. Peptide with unknown function. Does not exhibit any effect on human ion channel TRPV1 in a Xenopus laevis oocytes assay. The chain is Peptide Hact-SCRiP1 from Heliofungia actiniformis (Mushroom coral).